Here is a 557-residue protein sequence, read N- to C-terminus: Tight junction-associated protein 1 (557 aa).

The tract at residues 1-37 is disordered; the sequence is MTSAAPAKKPYRKAPPEHRELRLEIPGSRLEQEEPLT. Position 2 is an N-acetylthreonine (threonine 2). A compositionally biased stretch (basic and acidic residues) spans 14 to 23; sequence APPEHRELRL. A coiled-coil region spans residues 42–171; that stretch reads MKLLQEENEE…EELNERYRLD (130 aa). Disordered regions lie at residues 266–303 and 309–328; these read MSEGVPGDPASPPAPGSPTPQPNGECHSLGTARGSPEE and AFEKLNPYPTPSPPHPLYPG. Over residues 274-286 the composition is skewed to pro residues; sequence PASPPAPGSPTPQ. Serine 300 carries the post-translational modification Phosphoserine. Over residues 316 to 325 the composition is skewed to pro residues; sequence YPTPSPPHPL. Phosphothreonine is present on threonine 318. Residues serine 320 and serine 345 each carry the phosphoserine modification. The interval 364-409 is disordered; the sequence is EEGSERARPSPVPSTPASAQASPHHQPSPAPLTLSAPASSASSEED. The segment covering 378–388 has biased composition (polar residues); it reads TPASAQASPHH. A compositionally biased stretch (low complexity) spans 394–405; sequence PLTLSAPASSAS. Threonine 422 bears the Phosphothreonine mark. The segment covering 439 to 456 has biased composition (basic and acidic residues); that stretch reads LPELQRHFAHSPADRDEV. The segment at 439–557 is disordered; it reads LPELQRHFAH…QAQEQGNLLN (119 aa). At serine 491 the chain carries Phosphoserine. Over residues 530–542 the composition is skewed to basic residues; the sequence is RSPKRMGVHHLHR. Phosphoserine is present on serine 545. A compositionally biased stretch (polar residues) spans 546–557; that stretch reads LTQAQEQGNLLN.

Interacts with DLG1. Interacts with ARF6 (GTP-bound form). Ubiquitously expressed.

The protein localises to the golgi apparatus. Its subcellular location is the trans-Golgi network. It is found in the cell junction. The protein resides in the tight junction. It localises to the cell membrane. Its function is as follows. Plays a role in regulating the structure of the Golgi apparatus. The polypeptide is Tight junction-associated protein 1 (Homo sapiens (Human)).